The chain runs to 103 residues: Large ribosomal subunit protein eL42 (103 aa).

Positions 37 to 56 (GKRRYDRKQSGFGGQTKPVF) are disordered.

Belongs to the eukaryotic ribosomal protein eL42 family.

This Dictyostelium discoideum (Social amoeba) protein is Large ribosomal subunit protein eL42 (rpl36a).